A 302-amino-acid chain; its full sequence is Probable 2-(5''-triphosphoribosyl)-3'-dephosphocoenzyme-A synthase 1 (302 aa).

This sequence belongs to the CitG/MdcB family.

The enzyme catalyses 3'-dephospho-CoA + ATP = 2'-(5''-triphospho-alpha-D-ribosyl)-3'-dephospho-CoA + adenine. The protein is Probable 2-(5''-triphosphoribosyl)-3'-dephosphocoenzyme-A synthase 1 of Salmonella paratyphi A (strain ATCC 9150 / SARB42).